A 465-amino-acid chain; its full sequence is UDP-N-acetylmuramate--L-alanine ligase (465 aa).

Position 112-118 (112-118 (GTHGKTT)) interacts with ATP.

Belongs to the MurCDEF family.

The protein localises to the cytoplasm. The enzyme catalyses UDP-N-acetyl-alpha-D-muramate + L-alanine + ATP = UDP-N-acetyl-alpha-D-muramoyl-L-alanine + ADP + phosphate + H(+). The protein operates within cell wall biogenesis; peptidoglycan biosynthesis. In terms of biological role, cell wall formation. This Burkholderia pseudomallei (strain 1106a) protein is UDP-N-acetylmuramate--L-alanine ligase.